Reading from the N-terminus, the 552-residue chain is Chaperonin GroEL 1 (552 aa).

ATP is bound by residues Thr30 to Pro33, Lys51, Asp87 to Thr91, Gly415, Asn479 to Ala481, and Asp495.

The protein belongs to the chaperonin (HSP60) family. As to quaternary structure, forms a cylinder of 14 subunits composed of two heptameric rings stacked back-to-back. Interacts with the co-chaperonin GroES.

The protein localises to the cytoplasm. It carries out the reaction ATP + H2O + a folded polypeptide = ADP + phosphate + an unfolded polypeptide.. Together with its co-chaperonin GroES, plays an essential role in assisting protein folding. The GroEL-GroES system forms a nano-cage that allows encapsulation of the non-native substrate proteins and provides a physical environment optimized to promote and accelerate protein folding. This is Chaperonin GroEL 1 from Albidiferax ferrireducens (strain ATCC BAA-621 / DSM 15236 / T118) (Rhodoferax ferrireducens).